Reading from the N-terminus, the 609-residue chain is Neutral protease (609 aa).

Positions 1-24 (MNKTQRHINWLLAVSAATALPVTA) are cleaved as a signal peptide. Positions 25 to 196 (AEMINVNDGS…VLQTWDGLNH (172 aa)) are excised as a propeptide. His-343 provides a ligand contact to Zn(2+). The active site involves Glu-344. Residues His-347 and Glu-367 each contribute to the Zn(2+) site. His-426 acts as the Proton donor in catalysis.

It belongs to the peptidase M4 family. Requires Zn(2+) as cofactor.

The protein resides in the secreted. The enzyme catalyses Preferential cleavage of bonds with bulky hydrophobic groups in P2 and P1'. Phe at P1' is the most favored residue, which distinguished this enzyme from thermolysin.. Extracellular zinc metalloprotease. This chain is Neutral protease (nprV), found in Vibrio proteolyticus (Aeromonas proteolytica).